The sequence spans 1192 residues: Probable ATP-binding protein BrxC (1192 aa).

This sequence belongs to the BrxC family.

Functionally, BREX systems (bacteriophage exclusion) provide immunity against bacteriophage. A core protein of a type 1 BREX system. This system allows phage adsorption but prevents phage DNA replication, without degradation of the phage DNA. Methylation of bacterial DNA by PglX probably guides self/non-self discrimination. When the brxA-brxB-brxC-pglX and pglZ-brxL operons are transformed into a susceptible B.subtilis strain (BEST7003) they confer resistance to bacteriophages SPbeta, SP16, Zeta, phi3T and SP02 and partial protection to phages SP01 and SP82G (these include lytic and temperate phage). They do not protect against phages phi105, rho10 or rho14. Additionally confers a very slight reduction in efficiency of plasmid transformation. In Bacillus cereus (strain H3081.97), this protein is Probable ATP-binding protein BrxC.